We begin with the raw amino-acid sequence, 707 residues long: Leucine-rich repeat neuronal protein 3 (707 aa).

Residues 1–22 (MKDAPLQIHVLLGLAITALVQA) form the signal peptide. In terms of domain architecture, LRRNT spans 23 to 69 (GDKKVDCPQLCTCEIRPWFTPRSIYMEASTVDCNDLGLLNFPARLPA). The Extracellular segment spans residues 23–626 (GDKKVDCPQL…DGKENGKSHT (604 aa)). 12 LRR repeats span residues 70–91 (DTQI…TDFP), 93–114 (NLTG…NVQK), 117–138 (QLLS…CLYG), 141–162 (NLQE…AFVG), 165–186 (NLLR…WFEA), 189–210 (NLEI…NFQP), 213–234 (KLRS…ALVG), 237–258 (NLES…ALQK), 261–282 (NLKF…DFSN), 285–304 (HLKE…DSLA), 310–332 (DLRK…AFFR), and 335–358 (KLES…ESLP). Residues Asn93 and Asn103 are each glycosylated (N-linked (GlcNAc...) asparagine). The N-linked (GlcNAc...) asparagine glycan is linked to Asn223. One can recognise an LRRCT domain in the interval 368-421 (NPIRCDCVIRWINMNKTNIRFMEPDSLFCVDPPEFQGQNVRQVHFRDMMEICLP). A glycan (N-linked (GlcNAc...) asparagine) is linked at Asn382. In terms of domain architecture, Ig-like C2-type spans 421–514 (PLIAPESFPS…DLKSIMIKVG (94 aa)). Cys444 and Cys496 are joined by a disulfide. 3 N-linked (GlcNAc...) asparagine glycosylation sites follow: Asn522, Asn579, and Asn608. Residues 523–614 (GSLNIKIRDI…QCVNVTTKSL (92 aa)) form the Fibronectin type-III domain. A helical membrane pass occupies residues 627-647 (VFVACVGGLLGIIGVMCLFGC). The Cytoplasmic segment spans residues 648–707 (VSQEGNCENEHSYTVNHCHKPTLAFSELYPPLINLWESSKEKPASLEVKATAIGVPTSMS).

The protein resides in the membrane. This is Leucine-rich repeat neuronal protein 3 (Lrrn3) from Rattus norvegicus (Rat).